Here is a 1122-residue protein sequence, read N- to C-terminus: Desmoglein-2 (1122 aa).

Residues 1 to 28 (MARSPGDRCALLLLVQLLAVVCLDFGNG) form the signal peptide. Positions 29 to 54 (LHLEVFSPRNEGKPFPKHTHLVRQKR) are excised as a propeptide. Cadherin domains are found at residues 55–164 (AWIT…EPVF), 165–277 (TQEV…IPVV), 278–398 (ENKM…SSVV), and 397–504 (VVSF…CPVL). The Extracellular portion of the chain corresponds to 55–618 (AWITAPVALR…YDNYVGLGPA (564 aa)). N117 carries N-linked (GlcNAc...) asparagine glycosylation. N314, N467, and N519 each carry an N-linked (GlcNAc...) asparagine glycan. The chain crosses the membrane as a helical span at residues 619-639 (AIALMILALLLLLLVPLLLLI). Topologically, residues 640–1122 (CHCGGGAKGF…KHSTMQHSYS (483 aa)) are cytoplasmic. Phosphoserine occurs at positions 685, 706, 709, and 729. T808 carries the post-translational modification Phosphothreonine. 3 positions are modified to phosphoserine: S810, S814, and S819. Desmoglein repeat repeat units follow at residues 885–916 (AYSS…ESSV), 917–945 (SSRQ…SYAK), 946–971 (GSAV…ERVY), 972–995 (APTS…ERVI), 996–1024 (QPNG…ERES), and 1025–1055 (ILAP…ERIL). The segment at 913-932 (ESSVSSRQSQKVVPPPDPVA) is disordered. Positions 914–924 (SSVSSRQSQKV) are enriched in low complexity. A disordered region spans residues 1089–1122 (LPNLDLEESDRPNSTITTSSTRVTKHSTMQHSYS). Over residues 1100–1122 (PNSTITTSSTRVTKHSTMQHSYS) the composition is skewed to polar residues. S1122 bears the Phosphoserine mark.

In terms of assembly, interacts with PKP2. Interacts with CTNNB1; the interaction promotes localization of CTNNB1 at cell junctions thus reducing its nuclear localization and subsequent transcription of CTNNB1/TCF-target genes. Palmitoylated by ZDHHC5 at the plasma membrane. Expressed in undifferentiated pluripotent stem cells, expression decreases during differentiation (at protein level). Expressed by embryonic stem cells, expression is reduced during differentiation (at protein level). Expressed at the apical-lateral cell membrane of kidney tubular epithelial cells (at protein level). Expressed in epidermis and heart (at protein level). Expressed in the brain, spleen, lung, liver skeletal muscle, kidney and testis.

The protein localises to the cell membrane. It localises to the cell junction. It is found in the desmosome. The protein resides in the cytoplasm. In terms of biological role, a component of desmosome cell-cell junctions which are required for positive regulation of cellular adhesion. Involved in the interaction of plaque proteins and intermediate filaments mediating cell-cell adhesion. Required for proliferation and viability of embryonic stem cells in the blastocyst, thereby crucial for progression of post-implantation embryonic development. Maintains pluripotency by regulating epithelial to mesenchymal transition/mesenchymal to epithelial transition (EMT/MET) via interacting with and sequestering CTNNB1 to sites of cell-cell contact, thereby reducing translocation of CTNNB1 to the nucleus and subsequent transcription of CTNNB1/TCF-target genes. Promotes pluripotency and the multi-lineage differentiation potential of hematopoietic stem cells. Plays a role in endothelial cell sprouting and elongation via mediating the junctional-association of cortical actin fibers and CDH5. Plays a role in limiting inflammatory infiltration and the apoptotic response to injury in kidney tubular epithelial cells, potentially via its role in maintaining cell-cell adhesion and the epithelial barrier. This chain is Desmoglein-2 (Dsg2), found in Mus musculus (Mouse).